Here is a 99-residue protein sequence, read N- to C-terminus: Large ribosomal subunit protein bL28 (99 aa).

This sequence belongs to the bacterial ribosomal protein bL28 family.

In Rhizobium leguminosarum bv. trifolii (strain WSM2304), this protein is Large ribosomal subunit protein bL28.